The following is a 98-amino-acid chain: NADH-ubiquinone oxidoreductase chain 4L (98 aa).

3 helical membrane-spanning segments follow: residues 1–21, 29–49, and 61–81; these read MSLTYMNMFMAFTISLLGLLL, SLLCLEGMMLSLFVMMTMVIL, and IILLVFAACEAALGLSLLVMV.

This sequence belongs to the complex I subunit 4L family. In terms of assembly, core subunit of respiratory chain NADH dehydrogenase (Complex I) which is composed of 45 different subunits.

The protein resides in the mitochondrion inner membrane. The catalysed reaction is a ubiquinone + NADH + 5 H(+)(in) = a ubiquinol + NAD(+) + 4 H(+)(out). In terms of biological role, core subunit of the mitochondrial membrane respiratory chain NADH dehydrogenase (Complex I) which catalyzes electron transfer from NADH through the respiratory chain, using ubiquinone as an electron acceptor. Part of the enzyme membrane arm which is embedded in the lipid bilayer and involved in proton translocation. This is NADH-ubiquinone oxidoreductase chain 4L (MT-ND4L) from Platyrrhinus helleri (Heller's broad-nosed bat).